A 148-amino-acid chain; its full sequence is Ribonuclease P protein component (148 aa).

The tract at residues 119–148 is disordered; sequence PLPAAPGTMPPARAPRPSSLSPTEPDPRSD.

It belongs to the RnpA family. Consists of a catalytic RNA component (M1 or rnpB) and a protein subunit.

The catalysed reaction is Endonucleolytic cleavage of RNA, removing 5'-extranucleotides from tRNA precursor.. Functionally, RNaseP catalyzes the removal of the 5'-leader sequence from pre-tRNA to produce the mature 5'-terminus. It can also cleave other RNA substrates such as 4.5S RNA. The protein component plays an auxiliary but essential role in vivo by binding to the 5'-leader sequence and broadening the substrate specificity of the ribozyme. The sequence is that of Ribonuclease P protein component from Xanthomonas campestris pv. campestris (strain 8004).